The primary structure comprises 437 residues: Interactor protein for cytohesin exchange factors 1 (437 aa).

The 100-residue stretch at 41–140 (HADCQGWLYK…WLNKLGSAVI (100 aa)) folds into the PH domain. 2 disordered regions span residues 143 to 225 (ESTT…PDTV) and 273 to 307 (LSSDDTSSLSSNHDHLTVPDKPAGSKIMDKEETKV). Acidic residues predominate over residues 151–162 (CYSESEQEDPEI). Over residues 172-200 (ASQTQSLTAQQASSSSPSLSGTSYSFSSL) the composition is skewed to low complexity. Residues 201–214 (ENTVKTPSSFPSSL) are compositionally biased toward polar residues. Residues 273–283 (LSSDDTSSLSS) are compositionally biased toward low complexity. CRAC domain regions lie at residues 315 to 320 (KLYKSL) and 339 to 348 (LRKSFVKRCK). Positions 389–437 (KYREWKVMNTLLIQDIYQQQRASPAPDDTDDTPQELKKSPSSPSVENSI) are required for interaction with CYTH2. Residues 406–437 (QQQRASPAPDDTDDTPQELKKSPSSPSVENSI) are disordered. Ser411 carries the phosphoserine modification. Residues 427-437 (SPSSPSVENSI) show a composition bias toward polar residues.

Interacts with guanine-nucleotide exchange factors PSCD1, PSCD2, PSCD3 and PSCD4. Interacts (via C-terminus) with cytohesin-2 CYTH2.

Its subcellular location is the cytoplasm. The protein resides in the cell membrane. Enhances the promotion of guanine-nucleotide exchange by PSCD2 on ARF6 in a concentration-dependent manner. In Homo sapiens (Human), this protein is Interactor protein for cytohesin exchange factors 1 (IPCEF1).